A 485-amino-acid polypeptide reads, in one-letter code: Glutamate--tRNA ligase 1 (485 aa).

A 'HIGH' region motif is present at residues 10–20 (PSPTGAIHIGN). The 'KMSKS' region motif lies at 252-256 (KLSKR). Lys-255 is a binding site for ATP.

It belongs to the class-I aminoacyl-tRNA synthetase family. Glutamate--tRNA ligase type 1 subfamily. In terms of assembly, monomer.

The protein localises to the cytoplasm. The enzyme catalyses tRNA(Glu) + L-glutamate + ATP = L-glutamyl-tRNA(Glu) + AMP + diphosphate. Functionally, catalyzes the attachment of glutamate to tRNA(Glu) in a two-step reaction: glutamate is first activated by ATP to form Glu-AMP and then transferred to the acceptor end of tRNA(Glu). This is Glutamate--tRNA ligase 1 from Thermoanaerobacter pseudethanolicus (strain ATCC 33223 / 39E) (Clostridium thermohydrosulfuricum).